Here is a 235-residue protein sequence, read N- to C-terminus: Ribonuclease 3 (235 aa).

The 127-residue stretch at 11 to 137 (RAWCAEALGY…VVGALYLDGG (127 aa)) folds into the RNase III domain. Glu51 is a binding site for Mg(2+). Asp55 is an active-site residue. Residues Asp123 and Glu126 each contribute to the Mg(2+) site. Glu126 is a catalytic residue. Positions 164 to 233 (DYKTQLQEQL…ARQALMPEHH (70 aa)) constitute a DRBM domain.

It belongs to the ribonuclease III family. Homodimer. It depends on Mg(2+) as a cofactor.

The protein resides in the cytoplasm. The enzyme catalyses Endonucleolytic cleavage to 5'-phosphomonoester.. Functionally, digests double-stranded RNA. Involved in the processing of primary rRNA transcript to yield the immediate precursors to the large and small rRNAs (23S and 16S). Processes some mRNAs, and tRNAs when they are encoded in the rRNA operon. Processes pre-crRNA and tracrRNA of type II CRISPR loci if present in the organism. This is Ribonuclease 3 from Symbiobacterium thermophilum (strain DSM 24528 / JCM 14929 / IAM 14863 / T).